We begin with the raw amino-acid sequence, 335 residues long: Pyridoxal 5'-phosphate synthase subunit PdxS (335 aa).

D59 serves as a coordination point for D-ribose 5-phosphate. K116 serves as the catalytic Schiff-base intermediate with D-ribose 5-phosphate. G188 is a D-ribose 5-phosphate binding site. K200 provides a ligand contact to D-glyceraldehyde 3-phosphate. D-ribose 5-phosphate contacts are provided by residues G253 and 274–275 (GS).

The protein belongs to the PdxS/SNZ family. In terms of assembly, in the presence of PdxT, forms a dodecamer of heterodimers.

The catalysed reaction is aldehydo-D-ribose 5-phosphate + D-glyceraldehyde 3-phosphate + L-glutamine = pyridoxal 5'-phosphate + L-glutamate + phosphate + 3 H2O + H(+). The protein operates within cofactor biosynthesis; pyridoxal 5'-phosphate biosynthesis. Functionally, catalyzes the formation of pyridoxal 5'-phosphate from ribose 5-phosphate (RBP), glyceraldehyde 3-phosphate (G3P) and ammonia. The ammonia is provided by the PdxT subunit. Can also use ribulose 5-phosphate and dihydroxyacetone phosphate as substrates, resulting from enzyme-catalyzed isomerization of RBP and G3P, respectively. In Hyperthermus butylicus (strain DSM 5456 / JCM 9403 / PLM1-5), this protein is Pyridoxal 5'-phosphate synthase subunit PdxS.